The following is a 480-amino-acid chain: Proline--tRNA ligase (480 aa).

The protein belongs to the class-II aminoacyl-tRNA synthetase family. ProS type 3 subfamily. As to quaternary structure, homodimer.

Its subcellular location is the cytoplasm. It catalyses the reaction tRNA(Pro) + L-proline + ATP = L-prolyl-tRNA(Pro) + AMP + diphosphate. Functionally, catalyzes the attachment of proline to tRNA(Pro) in a two-step reaction: proline is first activated by ATP to form Pro-AMP and then transferred to the acceptor end of tRNA(Pro). This Methanosarcina mazei (strain ATCC BAA-159 / DSM 3647 / Goe1 / Go1 / JCM 11833 / OCM 88) (Methanosarcina frisia) protein is Proline--tRNA ligase.